The primary structure comprises 232 residues: Uracil-DNA glycosylase (232 aa).

Catalysis depends on D66, which acts as the Proton acceptor.

The protein belongs to the uracil-DNA glycosylase (UDG) superfamily. UNG family.

Its subcellular location is the cytoplasm. The catalysed reaction is Hydrolyzes single-stranded DNA or mismatched double-stranded DNA and polynucleotides, releasing free uracil.. Excises uracil residues from the DNA which can arise as a result of misincorporation of dUMP residues by DNA polymerase or due to deamination of cytosine. This Lactobacillus acidophilus (strain ATCC 700396 / NCK56 / N2 / NCFM) protein is Uracil-DNA glycosylase.